The following is a 289-amino-acid chain: Shikimate dehydrogenase (NADP(+)) (289 aa).

Shikimate contacts are provided by residues 22-24 and Thr69; that span reads SRS. Lys73 acts as the Proton acceptor in catalysis. An NADP(+)-binding site is contributed by Glu85. Shikimate is bound by residues Asn94 and Asp109. NADP(+) is bound by residues 134 to 138, 158 to 163, and Ile226; these read GAGGA and NRTLSR. A shikimate-binding site is contributed by Tyr228. Gly249 contributes to the NADP(+) binding site.

It belongs to the shikimate dehydrogenase family. As to quaternary structure, homodimer.

The catalysed reaction is shikimate + NADP(+) = 3-dehydroshikimate + NADPH + H(+). It participates in metabolic intermediate biosynthesis; chorismate biosynthesis; chorismate from D-erythrose 4-phosphate and phosphoenolpyruvate: step 4/7. In terms of biological role, involved in the biosynthesis of the chorismate, which leads to the biosynthesis of aromatic amino acids. Catalyzes the reversible NADPH linked reduction of 3-dehydroshikimate (DHSA) to yield shikimate (SA). This chain is Shikimate dehydrogenase (NADP(+)), found in Brucella canis (strain ATCC 23365 / NCTC 10854 / RM-666).